A 168-amino-acid polypeptide reads, in one-letter code: Ribosome maturation factor RimM (168 aa).

The PRC barrel domain maps to 96 to 168; that stretch reads EGDYYWTDLI…IIVVEWDADF (73 aa).

The protein belongs to the RimM family. In terms of assembly, binds ribosomal protein uS19.

The protein localises to the cytoplasm. Its function is as follows. An accessory protein needed during the final step in the assembly of 30S ribosomal subunit, possibly for assembly of the head region. Essential for efficient processing of 16S rRNA. May be needed both before and after RbfA during the maturation of 16S rRNA. It has affinity for free ribosomal 30S subunits but not for 70S ribosomes. The chain is Ribosome maturation factor RimM from Coxiella burnetii (strain Dugway 5J108-111).